Reading from the N-terminus, the 461-residue chain is Pyruvate kinase (461 aa).

Arg-46 contacts substrate. Asn-48 and Asp-80 together coordinate K(+). Residue 48 to 51 (NLAH) coordinates ATP. The ATP site is built by Arg-87 and Lys-165. Glu-232 contacts Mg(2+). Residues Gly-255, Asp-256, and Thr-288 each contribute to the substrate site. Asp-256 provides a ligand contact to Mg(2+).

This sequence belongs to the pyruvate kinase family. As to quaternary structure, homotetramer. A divalent metal cation serves as cofactor.

The enzyme catalyses pyruvate + ATP = phosphoenolpyruvate + ADP + H(+). Its pathway is carbohydrate degradation; glycolysis; pyruvate from D-glyceraldehyde 3-phosphate: step 5/5. Not activated by classical allosteric effectors. The protein is Pyruvate kinase (pyk) of Pyrobaculum aerophilum (strain ATCC 51768 / DSM 7523 / JCM 9630 / CIP 104966 / NBRC 100827 / IM2).